Here is a 184-residue protein sequence, read N- to C-terminus: MINDLKKDSEQRMLKTLESLEQGFAKVRTGRAHPSILNGVMVPYYGSDVPLNQVANVGVEDSRTLIVQPFERTMVAAIDKAIRESDLGLNPITADSIRVPLPALTEETRRDMQKIARSEAENAKVAIRNIRRDVLGDIKALLKEKEISEDDERRAGDDIQKITDKYVAEVDKRLAAKEAELMRV.

The protein belongs to the RRF family.

The protein localises to the cytoplasm. In terms of biological role, responsible for the release of ribosomes from messenger RNA at the termination of protein biosynthesis. May increase the efficiency of translation by recycling ribosomes from one round of translation to another. In Acinetobacter baumannii (strain SDF), this protein is Ribosome-recycling factor.